A 263-amino-acid polypeptide reads, in one-letter code: MAIKMALLTPDDLININMQLQKADSAVQEVTGLDIKGICKALYGTFSSSEKVGIVPVTSGNGIIGNFSASLHAITQYFGFDSFVTDMPDVSGYYEAVQNGAEIILMADDRTFLAHNLKNGKMANNQPCTGIIYAEIASRYLKADSKDVLVVGLGKVGFPGAEHLVQKDFRVYGYDADETLLERATSNLGIIPFDPANPKKFSIIFEATPCANTIPEAVLSENCVLSTPGIPCAISEELRDKYEVQLIAEPLGIGTASMLYSVL.

Residues Leu-8, Val-57, Ile-64, and Ala-107 each coordinate L-pyrrolysine. NAD(+) is bound by residues Lys-155, Val-156, Asp-175, Cys-210, Pro-228, Ile-230, and Glu-249.

The protein belongs to the PylD family.

The catalysed reaction is (3R)-3-methyl-D-ornithyl-N(6)-L-lysine + NAD(+) = L-pyrrolysine + NH4(+) + NADH + 2 H(+). The protein operates within amino-acid biosynthesis; L-pyrrolysine biosynthesis. Functionally, catalyzes the ultimate step of the pyrrolysine biosynthesis pathway by converting the isopeptide (3R)-3-methyl-D-ornithyl-N(6)-L-lysine to the 22nd proteinogenic amino acid. Is able to use surrogate substrates such as (3R)-D-ornithyl-N(6)-L-lysine in vitro. The chain is Pyrrolysine synthase from Methanosarcina barkeri (strain Fusaro / DSM 804).